Consider the following 528-residue polypeptide: Transcriptional activator protein UGA3 (528 aa).

The segment at residues 17-44 (CITCKIRKKRCSEDKPVCRDCRRLSFPC) is a DNA-binding region (zn(2)-C6 fungal-type). Positions 55-62 (SLKKIKAD) match the Nuclear localization signal motif.

In terms of assembly, UGA3 proteins associate in oligomers, at least in the presence of inducer.

Its subcellular location is the nucleus. Its function is as follows. GABA-dependent positive regulation of genes required for catabolism of GABA (UGA4, UGA1, and UGA2). This is Transcriptional activator protein UGA3 (UGA3) from Saccharomyces cerevisiae (strain ATCC 204508 / S288c) (Baker's yeast).